A 49-amino-acid polypeptide reads, in one-letter code: Light-harvesting protein B-875 beta chain (49 aa).

The Cytoplasmic portion of the chain corresponds to Ala-2–Gly-27. His-21 and His-39 together coordinate a bacteriochlorophyll. Residues Leu-28 to Trp-45 form a helical; Signal-anchor for type II membrane protein membrane-spanning segment. Residues Arg-46 to Phe-49 lie on the Periplasmic side of the membrane.

Belongs to the antenna complex beta subunit family. As to quaternary structure, the core complex is formed by different alpha and beta chains, binding bacteriochlorophyll molecules, and arranged most probably in tetrameric structures disposed around the reaction center. The non-pigmented gamma chains may constitute additional components.

It is found in the cell inner membrane. Its function is as follows. Antenna complexes are light-harvesting systems, which transfer the excitation energy to the reaction centers. The polypeptide is Light-harvesting protein B-875 beta chain (pufB) (Cereibacter sphaeroides (Rhodobacter sphaeroides)).